We begin with the raw amino-acid sequence, 222 residues long: Histidinol-phosphatase (222 aa).

D8 (nucleophile) is an active-site residue. Residues D8, D10, and D184 each coordinate Mg(2+). D10 functions as the Proton donor in the catalytic mechanism.

This sequence belongs to the HAD-like hydrolase superfamily. SerB family. Mg(2+) serves as cofactor.

The enzyme catalyses L-histidinol phosphate + H2O = L-histidinol + phosphate. It participates in amino-acid biosynthesis; L-histidine biosynthesis; L-histidine from 5-phospho-alpha-D-ribose 1-diphosphate: step 8/9. Catalyzes the dephosphorylation of histidinol-phosphate to histidinol, the direct precursor of histidine. The chain is Histidinol-phosphatase from Neisseria meningitidis serogroup C (strain 8013).